The sequence spans 405 residues: Acetylornithine/succinyldiaminopimelate aminotransferase (405 aa).

Residues 107–108 (GA) and Phe140 each bind pyridoxal 5'-phosphate. Arg143 contacts N(2)-acetyl-L-ornithine. 225 to 228 (DEVQ) contacts pyridoxal 5'-phosphate. Lys254 carries the N6-(pyridoxal phosphate)lysine modification. A N(2)-acetyl-L-ornithine-binding site is contributed by Thr282. Residue Thr283 coordinates pyridoxal 5'-phosphate.

Belongs to the class-III pyridoxal-phosphate-dependent aminotransferase family. ArgD subfamily. Homodimer. It depends on pyridoxal 5'-phosphate as a cofactor.

The protein localises to the cytoplasm. It carries out the reaction N(2)-acetyl-L-ornithine + 2-oxoglutarate = N-acetyl-L-glutamate 5-semialdehyde + L-glutamate. The enzyme catalyses N-succinyl-(2S,6S)-2,6-diaminopimelate + 2-oxoglutarate = (S)-2-succinylamino-6-oxoheptanedioate + L-glutamate. The protein operates within amino-acid biosynthesis; L-arginine biosynthesis; N(2)-acetyl-L-ornithine from L-glutamate: step 4/4. It participates in amino-acid biosynthesis; L-lysine biosynthesis via DAP pathway; LL-2,6-diaminopimelate from (S)-tetrahydrodipicolinate (succinylase route): step 2/3. Involved in both the arginine and lysine biosynthetic pathways. The sequence is that of Acetylornithine/succinyldiaminopimelate aminotransferase from Yersinia pestis.